A 419-amino-acid polypeptide reads, in one-letter code: MFDPLDLYTPDDIQVEALQFNLAEREPKDPCSPQRDEILTAVDEEESDDDDTIIDNLDLPSVKYAPPEVILCILILLKPDRQVNFNQETGKNKSVLEVCKSHGLEPDLLKRLLTWYTEEWPNKRLNSLEKICNKIPMLRFTVSKELLLGYYTSVLKKYNNSCGLNEEIIQELLKELSSRISENCGRTAQPSIVRYFELRNLSTSIPLHEPSLTADNLGWKTWGSSLILSQLVVDHLDYLHTTNVNMLANSDIKQIKVLELGAGTGLVGLSWALKWKELYGTENIEIFVTDLPEIVTNLKKNVSLNNLGDFVQAEILDWTNPHDFIDKFGHENEFDVILIADPIYSPQHPEWVVNMISKFLAASGTCHLEIPLRAKYAKEREVLKLLLKESDLKVVEERHSEGVDDWGAVKYLYRQIVRN.

S-adenosyl-L-methionine is bound by residues W222, 261–263 (GAG), D290, W318, and A340.

Belongs to the class I-like SAM-binding methyltransferase superfamily. METTL21 family.

It is found in the cytoplasm. In terms of biological role, S-adenosyl-L-methionine-dependent protein-lysine N-methyltransferase that mono- and dimethylates elongation factor 2 (EFT1/EFT2) at 'Lys-613' and methylates elongation factor 3A (YEF3). This is Protein-lysine N-methyltransferase EFM2 from Saccharomyces cerevisiae (strain ATCC 204508 / S288c) (Baker's yeast).